We begin with the raw amino-acid sequence, 400 residues long: MLPFYAQWVLESYDKAISPLLVSLLGLFSIASVLFVPKNRRFGVGFFIGMLWFYWISLGLRYFDMSFLIPLVVIACGIFMGFVFYIGLWCECLIVRFAFLLLLSYLTPFGFDWIVPESVFAYSYIGVDKLSFALSILALWILFKYKTWWKLGGVICLVFALDFGLKDSKIQNLPPLKIKLAQSAVSQDFDYRMREAKSIFSEHISDIQKAINEEYDVIILPESAFYVPLDSQYFPYFDSLLEMSHKIVIIVGALREEIHTDGRASYFNSTYKFDKGKVSFYDKVHLVPFGETLPSFLLPLVNTFFQGIGGFSAGKDFGYFDIAEIKFKNAICYEGSNRGFYADYPQYVIVTSNNAWFVPSIEPILQKNLMKYYARLYGSVIFHATNLSPAAIITPFVSSR.

5 consecutive transmembrane segments (helical) span residues 16–36 (AISP…VLFV), 42–62 (FGVG…GLRY), 67–87 (FLIP…FYIG), 97–117 (FAFL…IVPE), and 123–143 (SYIG…WILF). The CN hydrolase domain maps to 181–400 (AQSAVSQDFD…AIITPFVSSR (220 aa)). The active-site Proton acceptor is the E222. The active site involves K283. Catalysis depends on C332, which acts as the Nucleophile. The helical transmembrane segment at 377–397 (YGSVIFHATNLSPAAIITPFV) threads the bilayer.

The protein belongs to the CN hydrolase family. Apolipoprotein N-acyltransferase subfamily.

The protein resides in the cell inner membrane. It catalyses the reaction N-terminal S-1,2-diacyl-sn-glyceryl-L-cysteinyl-[lipoprotein] + a glycerophospholipid = N-acyl-S-1,2-diacyl-sn-glyceryl-L-cysteinyl-[lipoprotein] + a 2-acyl-sn-glycero-3-phospholipid + H(+). Its pathway is protein modification; lipoprotein biosynthesis (N-acyl transfer). Functionally, catalyzes the phospholipid dependent N-acylation of the N-terminal cysteine of apolipoprotein, the last step in lipoprotein maturation. The polypeptide is Apolipoprotein N-acyltransferase (Helicobacter hepaticus (strain ATCC 51449 / 3B1)).